Reading from the N-terminus, the 221-residue chain is Probable septum site-determining protein MinC (221 aa).

This sequence belongs to the MinC family. As to quaternary structure, interacts with MinD and FtsZ.

Cell division inhibitor that blocks the formation of polar Z ring septums. Rapidly oscillates between the poles of the cell to destabilize FtsZ filaments that have formed before they mature into polar Z rings. Prevents FtsZ polymerization. This is Probable septum site-determining protein MinC from Shewanella sp. (strain ANA-3).